A 325-amino-acid polypeptide reads, in one-letter code: LIM and senescent cell antigen-like-containing domain protein 1 (325 aa).

Position 2 is an N-acetylalanine (alanine 2). 5 consecutive LIM zinc-binding domains span residues 10–62 (CERC…CEHD), 71–121 (CHQC…CRPC), 135–184 (CQKC…CLPC), 193–243 (CGAC…CETH), and 252–303 (CFHC…CKKC).

Component of the heterotrimeric IPP (ILK-PINCH-PARVIN) complex composed of ILK, LIMS1/PINCH and PARVA; the complex binds to F-actin via the C-terminal tail of LIMS1 and the N-terminal region of PARVA, promoting F-actin filament bundling. Formation of the IPP complex is dependent on protein kinase C and precedes integrin-mediated cell adhesion and spreading. Competes with LIMS2 for interaction with ILK. Interacts (via LIM zinc-binding 5) with TGFB1I1. Interacts with SH3/SH2 adapter NCK2, thereby linking the complex to cell surface receptors. Expressed in most tissues except in the brain.

Its subcellular location is the cell junction. It localises to the focal adhesion. It is found in the cell membrane. Its function is as follows. Within the IPP (ILK-PINCH-PARVIN) complex, binds to F-actin, promoting F-actin bundling, a process required to generate force for actin cytoskeleton reorganization and subsequent dynamic cell adhesion events such as cell spreading and migration. The polypeptide is LIM and senescent cell antigen-like-containing domain protein 1 (LIMS1) (Homo sapiens (Human)).